Reading from the N-terminus, the 490-residue chain is Phosphoglucosamine mutase (490 aa).

The Phosphoserine intermediate role is filled by serine 139. Residues serine 139, aspartate 279, aspartate 281, and aspartate 283 each contribute to the Mg(2+) site. Residue serine 139 is modified to Phosphoserine.

The protein belongs to the phosphohexose mutase family. Requires Mg(2+) as cofactor. Activated by phosphorylation.

It catalyses the reaction alpha-D-glucosamine 1-phosphate = D-glucosamine 6-phosphate. Its function is as follows. Catalyzes the conversion of glucosamine-6-phosphate to glucosamine-1-phosphate. The chain is Phosphoglucosamine mutase from Nostoc punctiforme (strain ATCC 29133 / PCC 73102).